The chain runs to 279 residues: tRNA uridine(34) hydroxylase (279 aa).

Residues 126–221 (TKPGMHVIDT…YLQSVKGADS (96 aa)) enclose the Rhodanese domain. Residue C181 is the Cysteine persulfide intermediate of the active site.

Belongs to the TrhO family.

The enzyme catalyses uridine(34) in tRNA + AH2 + O2 = 5-hydroxyuridine(34) in tRNA + A + H2O. In terms of biological role, catalyzes oxygen-dependent 5-hydroxyuridine (ho5U) modification at position 34 in tRNAs. This chain is tRNA uridine(34) hydroxylase, found in Anaplasma phagocytophilum (strain HZ).